The following is a 468-amino-acid chain: Glucose-dependent insulinotropic receptor (468 aa).

Residues Met1 to Ser6 are Extracellular-facing. A helical membrane pass occupies residues Phe7–Val27. Topologically, residues Ala28 to Asp37 are cytoplasmic. The helical transmembrane segment at Gly38–Ile58 threads the bilayer. Topologically, residues Ser59–Arg81 are extracellular. Residues Met82 to Asp102 form a helical membrane-spanning segment. Over Arg103 to Cys125 the chain is Cytoplasmic. A helical transmembrane segment spans residues Ile126–Phe146. The Extracellular segment spans residues Gln147–Arg164. The helical transmembrane segment at Phe165 to Tyr185 threads the bilayer. The Cytoplasmic portion of the chain corresponds to Cys186 to Thr226. The chain crosses the membrane as a helical span at residues Val227–Val247. The Extracellular portion of the chain corresponds to Gln248–Lys262. A helical transmembrane segment spans residues Tyr263–Gln283. Residues Arg284 to Gly468 are Cytoplasmic-facing.

Belongs to the G-protein coupled receptor 1 family. As to expression, expression restricted to the beta-cells of pancreatic islets.

The protein localises to the cell membrane. Its function is as follows. Receptor for the endogenous fatty-acid ethanolamide oleoylethanolamide (OEA) and lysophosphatidylcholine (LPC). Functions as a glucose-dependent insulinotropic receptor. The activity of this receptor is mediated by G proteins which activate adenylate cyclase. Seems to act through a G(s) mediated pathway. The chain is Glucose-dependent insulinotropic receptor (Gpr119) from Rattus norvegicus (Rat).